A 274-amino-acid chain; its full sequence is Transcription factor MYB58 (274 aa).

HTH myb-type domains are found at residues 11–63 (KTKV…INYL) and 64–118 (RPDV…KKRL). 2 consecutive DNA-binding regions (H-T-H motif) follow at residues 39–63 (WRSLPKQAGLLRCGKSCRLRWINYL) and 91–114 (WSKIASKLPGRTDNEIKNVWHTHL). Disordered regions lie at residues 121–160 (ETNLNADEAGSKGSLNEEENSQESSPNASMSFAGSNISSK) and 237–274 (SELGLEENDNQQQQQQHKQGTEDEHSSSLLESYELLIH). Over residues 263 to 274 (SSLLESYELLIH) the composition is skewed to low complexity.

In terms of tissue distribution, expressed in leaves. Specifically expressed in fibers and vessels undergoing secondary wall thickening, especially in inflorescence stems.

The protein resides in the nucleus. Functionally, transcriptional activator that binds DNA to the AC cis-elements 5'-ACCTACC-3', 5'-ACCAACC-3' and 5'-ACCTAAC-3' of promoters and specifically activates lignin biosynthetic genes during secondary wall formation mediated by SND1. The sequence is that of Transcription factor MYB58 from Arabidopsis thaliana (Mouse-ear cress).